Here is a 443-residue protein sequence, read N- to C-terminus: MSKTYHFIGIKGSGMSALALLLHQMGHKVQGSDVEKYYFTQRGLEQAGITILPFSEDNISPDMELIAGNAFREDNNSEVAYAMRHQLPFKRYHEFLGEFMKQFTSLGVAGAHGKTSTTGLLSHVLKHMTATSYLIGDGTGHGAADARYFVFESDEYERHFMPYHPEYSIITNIDFDHPDYFTGLDDVFNAFNDYAKQVKKALFVYGEDEELRKISSPAPIYYYGFEDTDDFVAFDITRTTNGSDFKVKHKGHAIGQFHVPAYGRHNILNATAVIANLFIAGFDMKLVAEHLKSFSGVKRRFTEKVINDTIIIDDFAHHPTEIIATLDAARQKYPNKEIIAIFQPHTFTRTIALLDDFAHALNEADSVYLAPIYGSAREVDKGDVKVEDLAARVERPAKVISVDNVSPLLDHDNAVYVFMGAGDIQLYERSFEELLANLTKNNQ.

Position 110–116 (110–116 (GAHGKTS)) interacts with ATP.

Belongs to the MurCDEF family.

The protein localises to the cytoplasm. It catalyses the reaction UDP-N-acetyl-alpha-D-muramate + L-alanine + ATP = UDP-N-acetyl-alpha-D-muramoyl-L-alanine + ADP + phosphate + H(+). The protein operates within cell wall biogenesis; peptidoglycan biosynthesis. Its function is as follows. Cell wall formation. The sequence is that of UDP-N-acetylmuramate--L-alanine ligase from Streptococcus equi subsp. equi (strain 4047).